The chain runs to 273 residues: 2,3,4,5-tetrahydropyridine-2,6-dicarboxylate N-succinyltransferase (273 aa).

Substrate is bound by residues Arg-104 and Asp-141.

This sequence belongs to the transferase hexapeptide repeat family. In terms of assembly, homotrimer.

It is found in the cytoplasm. The catalysed reaction is (S)-2,3,4,5-tetrahydrodipicolinate + succinyl-CoA + H2O = (S)-2-succinylamino-6-oxoheptanedioate + CoA. It functions in the pathway amino-acid biosynthesis; L-lysine biosynthesis via DAP pathway; LL-2,6-diaminopimelate from (S)-tetrahydrodipicolinate (succinylase route): step 1/3. This chain is 2,3,4,5-tetrahydropyridine-2,6-dicarboxylate N-succinyltransferase, found in Nitrosococcus oceani (strain ATCC 19707 / BCRC 17464 / JCM 30415 / NCIMB 11848 / C-107).